The chain runs to 913 residues: Isoleucine--tRNA ligase (913 aa).

Positions Pro-57–Thr-67 match the 'HIGH' region motif. Glu-549 is a binding site for L-isoleucyl-5'-AMP. A 'KMSKS' region motif is present at residues Lys-590–Ser-594. Position 593 (Lys-593) interacts with ATP. 4 residues coordinate Zn(2+): Cys-881, Cys-884, Cys-901, and Cys-904.

The protein belongs to the class-I aminoacyl-tRNA synthetase family. IleS type 1 subfamily. As to quaternary structure, monomer. Zn(2+) serves as cofactor.

The protein localises to the cytoplasm. It catalyses the reaction tRNA(Ile) + L-isoleucine + ATP = L-isoleucyl-tRNA(Ile) + AMP + diphosphate. Catalyzes the attachment of isoleucine to tRNA(Ile). As IleRS can inadvertently accommodate and process structurally similar amino acids such as valine, to avoid such errors it has two additional distinct tRNA(Ile)-dependent editing activities. One activity is designated as 'pretransfer' editing and involves the hydrolysis of activated Val-AMP. The other activity is designated 'posttransfer' editing and involves deacylation of mischarged Val-tRNA(Ile). The sequence is that of Isoleucine--tRNA ligase from Fervidobacterium nodosum (strain ATCC 35602 / DSM 5306 / Rt17-B1).